The sequence spans 378 residues: tRNA N(3)-cytidine methyltransferase METTL2B (378 aa).

Residue Ala2 is modified to N-acetylalanine. Phosphoserine is present on Ser4. 2 residues coordinate S-adenosyl-L-methionine: Trp78 and Tyr82. Thr154 carries the phosphothreonine modification. S-adenosyl-L-methionine is bound by residues Gly188, Asp213, Asp239, Leu240, and Ile260.

It belongs to the methyltransferase superfamily. METL family. Monomer. Interacts with DALRD3.

It is found in the cytoplasm. The enzyme catalyses cytidine(32) in tRNA(Thr) + S-adenosyl-L-methionine = N(3)-methylcytidine(32) in tRNA(Thr) + S-adenosyl-L-homocysteine + H(+). The catalysed reaction is cytidine(32) in tRNA(Arg)(CCU) + S-adenosyl-L-methionine = N(3)-methylcytidine(32) in tRNA(Arg)(CCU) + S-adenosyl-L-homocysteine + H(+). In terms of biological role, S-adenosyl-L-methionine-dependent methyltransferase that mediates N(3)-methylcytidine modification of residue 32 of the tRNA anticodon loop of tRNA(Thr)(UGU) and tRNA(Arg)(CCU). This chain is tRNA N(3)-cytidine methyltransferase METTL2B, found in Homo sapiens (Human).